Here is a 334-residue protein sequence, read N- to C-terminus: Mevalonate kinase (334 aa).

110–120 (PVGAGLGSSAA) contributes to the ATP binding site. Asp161 (proton acceptor) is an active-site residue.

It belongs to the GHMP kinase family. Mevalonate kinase subfamily. Homodimer. The cofactor is Mg(2+).

It is found in the cytoplasm. The catalysed reaction is (R)-mevalonate + ATP = (R)-5-phosphomevalonate + ADP + H(+). It functions in the pathway isoprenoid biosynthesis; isopentenyl diphosphate biosynthesis via mevalonate pathway; isopentenyl diphosphate from (R)-mevalonate: step 1/3. Functionally, catalyzes the phosphorylation of (R)-mevalonate (MVA) to (R)-mevalonate 5-phosphate (MVAP). Functions in the mevalonate (MVA) pathway leading to isopentenyl diphosphate (IPP), a key precursor for the biosynthesis of isoprenoid compounds such as archaeal membrane lipids. This chain is Mevalonate kinase, found in Pyrococcus furiosus (strain ATCC 43587 / DSM 3638 / JCM 8422 / Vc1).